A 327-amino-acid chain; its full sequence is rRNA 2'-O-methyltransferase fibrillarin (327 aa).

The segment at 1-93 (MKPGFSPRGG…RGNQSGKNVM (93 aa)) is disordered. The segment covering 7–80 (PRGGGFGGRG…GGGRGRGGGR (74 aa)) has biased composition (gly residues). Asymmetric dimethylarginine is present on residues Arg-8, Arg-15, Arg-21, Arg-24, Arg-28, and Arg-31. Glycyl lysine isopeptide (Lys-Gly) (interchain with G-Cter in SUMO2) cross-links involve residues Lys-90, Lys-108, and Lys-115. An N6-acetyllysine modification is found at Lys-108. At Ser-122 the chain carries Phosphoserine. Lys-127 carries the post-translational modification N6-acetyllysine. Ser-130 and Ser-132 each carry phosphoserine. Residues Lys-137, Lys-149, and Lys-164 each participate in a glycyl lysine isopeptide (Lys-Gly) (interchain with G-Cter in SUMO2) cross-link. S-adenosyl-L-methionine-binding positions include 178-179 (TT) and 197-198 (EF). Lys-211 and Lys-212 each carry N6-acetyllysine. S-adenosyl-L-methionine is bound by residues 222–223 (DA) and 242–245 (DVAQ).

The protein belongs to the methyltransferase superfamily. Fibrillarin family. Component of box C/D small nucleolar ribonucleoprotein (snoRNP) particles that contain SNU13, FBL, NOP5 and NOP56, plus a guide RNA. It is associated with the U3, U8, U13, X and Y small nuclear RNAs. Component of several ribosomal and nucleolar protein complexes. Part of the small subunit (SSU) processome, composed of more than 70 proteins and the RNA chaperone small nucleolar RNA (snoRNA) U3. Interacts with PRMT5 and UTP20. Interacts with DDX5 and C1QBP. Interacts with NOL11. Interacts with PIH1D1. Interacts with RRP1B. Interacts with NOLC1. Interacts with SDE2. Interacts with NOP2 and NOP56. Post-translationally, ubiquitinated. Ubiquitination leads to proteasomal degradation. Deubiquitinated by USP36. By homology to other fibrillarins, some or all of the N-terminal domain arginines are modified to asymmetric dimethylarginine (DMA). In terms of processing, acetylated by CREBBP/CBP, preventing methylation of 'Gln-105' of histone H2A (H2AQ104me), without affecting rRNA methylation. Deacetylation by SIRT7 restores methylation of 'Gln-105' of histone H2A (H2AQ104me).

The protein localises to the nucleus. Its subcellular location is the nucleolus. The protein resides in the nucleoplasm. The catalysed reaction is L-glutaminyl-[histone H2A] + S-adenosyl-L-methionine = N(5)-methyl-L-glutaminyl-[histone H2A] + S-adenosyl-L-homocysteine + H(+). It carries out the reaction a ribonucleotide in rRNA + S-adenosyl-L-methionine = a 2'-O-methylribonucleotide in rRNA + S-adenosyl-L-homocysteine + H(+). The enzyme catalyses a ribonucleotide in U6 snRNA + S-adenosyl-L-methionine = a 2'-O-methylribonucleotide in U6 snRNA + S-adenosyl-L-homocysteine + H(+). Its function is as follows. S-adenosyl-L-methionine-dependent methyltransferase that has the ability to methylate both RNAs and proteins. Involved in pre-rRNA processing by catalyzing the site-specific 2'-hydroxyl methylation of ribose moieties in pre-ribosomal RNA. Site specificity is provided by a guide RNA that base pairs with the substrate. Methylation occurs at a characteristic distance from the sequence involved in base pairing with the guide RNA. Probably catalyzes 2'-O-methylation of U6 snRNAs in box C/D RNP complexes. U6 snRNA 2'-O-methylation is required for mRNA splicing fidelity. Also acts as a protein methyltransferase by mediating methylation of 'Gln-105' of histone H2A (H2AQ104me), a modification that impairs binding of the FACT complex and is specifically present at 35S ribosomal DNA locus. Part of the small subunit (SSU) processome, first precursor of the small eukaryotic ribosomal subunit. During the assembly of the SSU processome in the nucleolus, many ribosome biogenesis factors, an RNA chaperone and ribosomal proteins associate with the nascent pre-rRNA and work in concert to generate RNA folding, modifications, rearrangements and cleavage as well as targeted degradation of pre-ribosomal RNA by the RNA exosome. This is rRNA 2'-O-methyltransferase fibrillarin (Fbl) from Rattus norvegicus (Rat).